The primary structure comprises 813 residues: Tax1-binding protein 1 homolog (813 aa).

Phosphoserine occurs at positions 124, 138, and 225. Residues 144 to 627 (TTKAGLLELK…LENQAERKME (484 aa)) are a coiled coil. Residues 320 to 420 (EEIGRLQLCL…ELKLNAMKKD (101 aa)) form an oligomerization region. Residues 489–502 (DASVNTDPATSAST) are compositionally biased toward polar residues. Positions 489-508 (DASVNTDPATSASTVDVKPS) are disordered. Ser617, Ser633, and Ser690 each carry phosphoserine. The disordered stretch occupies residues 663 to 738 (YASQETRDGA…DPPSQHLRGH (76 aa)). 2 consecutive UBZ1-type zinc fingers follow at residues 751–777 (HKKCPLCELMFPPNYDQSKFEEHVESH) and 778–804 (WKVCPMCSEQFPPDYDQQVFERHVQTH). Residues Cys754, Cys757, His773, His777, Cys781, Cys784, His800, and His804 each coordinate Zn(2+).

As to quaternary structure, homooligomer. Interacts with TNFAIP3. Interacts with STARD13. Interacts with MYO6. Interacts with TOM1; the interaction is indirect and is mediated by MYO6, which acts as a bridge between TOM1 and TAX1BP1. Interacts with MAVS; this interaction induces MAVS polyubiquitination. Interacts with TNIP1. Interacts with TRAF6; this interaction mediates deubiquitination of TRAF6 and inhibition of NF-kappa-B activation. Interacts with RIPK1; this interaction negatively regulates RIPK1 ubiquitination. Interacts with NBR1. Interacts with TBK1. Interacts with RB1CC1. Interacts with SQSTM1. Interacts with AZI2.

It is found in the cytoplasm. The protein localises to the mitochondrion. It localises to the preautophagosomal structure. Its subcellular location is the cytoplasmic vesicle. The protein resides in the autophagosome. Its function is as follows. Ubiquitin-binding adapter that participates in inflammatory, antiviral and innate immune processes as well as selective autophagy regulation. Plays a key role in the negative regulation of NF-kappa-B and IRF3 signalings by acting as an adapter for the ubiquitin-editing enzyme A20/TNFAIP3 to bind and inactivate its substrates. Disrupts the interactions between the E3 ubiquitin ligase TRAF3 and TBK1/IKBKE to attenuate 'Lys63'-linked polyubiquitination of TBK1 and thereby IFN-beta production. Also recruits A20/TNFAIP3 to ubiquitinated signaling proteins TRAF6 and RIPK1, leading to their deubiquitination and disruption of IL-1 and TNF-induced NF-kappa-B signaling pathways. Inhibits virus-induced apoptosis by inducing the 'Lys-48'-linked polyubiquitination and degradation of MAVS via recruitment of the E3 ligase ITCH, thereby attenuating MAVS-mediated apoptosis signaling. As a macroautophagy/autophagy receptor, facilitates the xenophagic clearance of pathogenic bacteria such as Salmonella typhimurium and Mycobacterium tuberculosis. Upon NBR1 recruitment to the SQSTM1-ubiquitin condensates, acts as the major recruiter of RB1CC1 to these ubiquitin condensates to promote their autophagic degradation. The polypeptide is Tax1-binding protein 1 homolog (TAX1BP1) (Pongo abelii (Sumatran orangutan)).